Consider the following 90-residue polypeptide: Small ribosomal subunit protein uS15 (90 aa).

Belongs to the universal ribosomal protein uS15 family. Part of the 30S ribosomal subunit. Forms a bridge to the 50S subunit in the 70S ribosome, contacting the 23S rRNA.

Its function is as follows. One of the primary rRNA binding proteins, it binds directly to 16S rRNA where it helps nucleate assembly of the platform of the 30S subunit by binding and bridging several RNA helices of the 16S rRNA. Functionally, forms an intersubunit bridge (bridge B4) with the 23S rRNA of the 50S subunit in the ribosome. In Wolbachia sp. subsp. Brugia malayi (strain TRS), this protein is Small ribosomal subunit protein uS15.